The primary structure comprises 421 residues: EQQRYLNAKKYVKLFLVADYIMYLKYGRNLTAVRTRMYDIDNVITPIYHRMNIHVALVGLEIWSNTDKIIVQSSADVTLDLFAKWRATDLLSRKSHDNAQLLTGINFNGPTAGLGYLGGICNTMYSAGIVQDHSKIHDLVAIAIAHEMGHNLGMDHDKDTCTCGTRPCIMAGALSCEASFLFSDCSQKDHQEFLIKNMPQCILKKPLKTDVVSPAVCGNYFVEVGEECDCGPPRTCRDPCCDAATCKLRQGAQCAEGLCCDQCRFKGAGTECRAAKDECDMADVCTGRSTECTDRFQRNGQPCKNNNGYCYNGKCPIMADQCIALFGPGATVSQDACFQFNREGNHYGYCRKEQNTKIACEPQDVKCGRLYCFPNSPENKNPCNIYYSPNDEDKGMVLPGTKCADGKACSNGQCVDVNTPY.

Residues 10–206 (KYVKLFLVAD…NMPQCILKKP (197 aa)) form the Peptidase M12B domain. Asn29 carries N-linked (GlcNAc...) asparagine glycosylation. Cystine bridges form between Cys121-Cys201, Cys161-Cys185, and Cys163-Cys168. His146 is a Zn(2+) binding site. Glu147 is an active-site residue. His150 and His156 together coordinate Zn(2+). In terms of domain architecture, Disintegrin spans 214 to 299 (PAVCGNYFVE…TECTDRFQRN (86 aa)). Residues Val216, Asn219, Phe221, Glu223, Glu226, and Asp229 each contribute to the Ca(2+) site. 14 cysteine pairs are disulfide-bonded: Cys217–Cys246, Cys228–Cys241, Cys230–Cys236, Cys240–Cys263, Cys254–Cys260, Cys259–Cys285, Cys272–Cys292, Cys279–Cys310, Cys303–Cys315, Cys322–Cys372, Cys337–Cys383, Cys350–Cys360, Cys367–Cys409, and Cys403–Cys414. Residues 278 to 280 (ECD) carry the D/ECD-tripeptide motif. Asp280, Met281, Asp283, Asp294, and Arg295 together coordinate Ca(2+).

Belongs to the venom metalloproteinase (M12B) family. P-III subfamily. P-IIIc sub-subfamily. Homodimer; disulfide-linked. Requires Zn(2+) as cofactor. As to expression, expressed by the venom gland.

The protein localises to the secreted. Snake venom zinc metalloprotease that induces apoptosis in vascular endothelial cells (VEC), without degrading the extracellular matrix (it cannot cleave collagen) or inhibiting adhesion of VEC. Has also fibrinogenolytic and hemorrhagic activities. The sequence is that of Zinc metalloproteinase-disintegrin-like crotastatin from Crotalus durissus terrificus (South American rattlesnake).